Reading from the N-terminus, the 253-residue chain is 20 kDa chaperonin, chloroplastic (253 aa).

Residues 1–50 (MAATQLTASPVTMSARSLASLDGLRASSVKFSSLKPGTLRQSQFRRLVVK) constitute a chloroplast transit peptide. Cpn-10 domain regions lie at residues 60 to 153 (TSIK…GILE) and 159 to 252 (DLKP…MAIL). A Phosphothreonine modification is found at T212.

Belongs to the GroES chaperonin family. As to quaternary structure, homotetramer. Forms stable complexes with CPN60 in the presence of ATP. Interacts with FSD1. Interacts with CLPT1 and CLPT2. Interacts with CHLH. Interacts with SPY. In terms of tissue distribution, ubiquitous. Most abundant in leaves and inflorescence. Low levels found in roots.

It is found in the plastid. The protein resides in the chloroplast. Its function is as follows. Seems to function only as a co-chaperone, along with CPN60, and in certain cases is essential for the discharge of biologically active proteins from CPN60. Required to activate the iron superoxide dismutases (FeSOD). Functionally, involved in abscisic acid (ABA) signaling, independently of its co-chaperone role. Acts as a negative regulator of the CHLH-WRKY40 coupled ABA signaling pathway, downstream of CHLH and upstream of WRKY40. The sequence is that of 20 kDa chaperonin, chloroplastic (CPN20) from Arabidopsis thaliana (Mouse-ear cress).